A 295-amino-acid chain; its full sequence is MAVNSLSVMSPDGGLSRYLTEIRKFPMLSKDEEFMLAQRWKEHQDPQAAHKMVTSHLRLVAKIAMGYRGYGLPIGEVISEGNVGLMQAVKKFEPEKGFRLATYAMWWIRASIQEYILRSWSLVKMGTTAAQKKLFFNLRKAKSQIAAFQEGDLHPDQVSQIATKLGVLDSEVISMNRRLSGPDASLNAPLRADGESEWQDWLADEEQVSQETRVAEDEEKSLRMSLLEEAMVELTDRERHILTERRLKDDPTTLEELAAQYGVSRERVRQIEVRAFEKLQKTMREAAIAKNMVDA.

The tract at residues 52–121 (MVTSHLRLVA…IQEYILRSWS (70 aa)) is sigma-70 factor domain-2. Positions 76–79 (EVIS) match the Interaction with polymerase core subunit RpoC motif. Residues 230 to 281 (AMVELTDRERHILTERRLKDDPTTLEELAAQYGVSRERVRQIEVRAFEKLQK) form a sigma-70 factor domain-4 region. Positions 254–273 (LEELAAQYGVSRERVRQIEV) form a DNA-binding region, H-T-H motif.

The protein belongs to the sigma-70 factor family. RpoH subfamily. Interacts with the RNA polymerase core enzyme.

The protein localises to the cytoplasm. Functionally, sigma factors are initiation factors that promote the attachment of RNA polymerase to specific initiation sites and are then released. This sigma factor is involved in regulation of expression of heat shock genes. In Caulobacter vibrioides (strain ATCC 19089 / CIP 103742 / CB 15) (Caulobacter crescentus), this protein is RNA polymerase sigma factor RpoH.